The sequence spans 669 residues: MMAGLLSTQCNSTLSKLKHLSNNPALSVLTSTHRKYSSKDGAGSEYLHKSIVPSMHYQKSLPRLPVPKLEDTIRRYLAAQRPLLNDEQYSNTEKLAQEFQSGAGKQLHEELVALDKKNKHTSYISAPWFDMYLSARESIVLNFNPFMSFNPDPKPEYNDQLVRATNMVCSAVRFMKTLRAGLLEPEVFHLNPAKSDTDSFKKLIRWVPPSISWFGAYMVNAYPLDMSQYFRLFNSTRIPKYKRDELLTDDRGRHLLVMKRGNLYVFDALDRDGNLIKPAEVQAHLKYILEDPTQASAFPLGVLTSENRDTWTGLRQKLLDAGNGEALQLVDTALFCLCLDEEVLRDHIHISHNMLHGDGCNRWYDKSFSVILAKDGQAAINFEHSWGDGVAVLRFQNEVFKDTTEKPLVGPGSQPASVDSSSAVRRLEFKLNDELKAGITKAKENFQAAVSKLTIDAMEFKKGGKEQLKKKKLSPDAIAQLAFQMGFLRQYGQTVATYESCSTAAFKHGRTETIRPASIHTKQCAKAFVQQPGQHSVEQLLGLLNECSKYHGQLTREAAMGQGFDRHLFAMRYLANSKGMALPSLYQDPAYAAINHNILSTSTLTSPAVSLGGFAPVVPDGFGVGYGVHDEWIGCNVSSYPARDVHEFLRCVHKSLEDIFTVLDGNPIH.

Residues 1 to 36 (MMAGLLSTQCNSTLSKLKHLSNNPALSVLTSTHRKY) constitute a mitochondrion transit peptide. Over 37-190 (SSKDGAGSEY…GLLEPEVFHL (154 aa)) the chain is Mitochondrial matrix. An intramembrane region (note=Mitochondrial inner membrane) is located at residues 191–220 (NPAKSDTDSFKKLIRWVPPSISWFGAYMVN). Topologically, residues 221-669 (AYPLDMSQYF…FTVLDGNPIH (449 aa)) are mitochondrial matrix. The active-site Proton acceptor is His-384. CoA is bound at residue 464 to 476 (GKEQLKKKKLSPD). Residues Tyr-498, Ser-500, and Thr-511 each coordinate (R)-carnitine.

The protein belongs to the carnitine/choline acetyltransferase family.

The protein resides in the mitochondrion inner membrane. It catalyses the reaction (R)-carnitine + hexadecanoyl-CoA = O-hexadecanoyl-(R)-carnitine + CoA. It carries out the reaction octanoyl-CoA + (R)-carnitine = O-octanoyl-(R)-carnitine + CoA. The enzyme catalyses decanoyl-CoA + (R)-carnitine = O-decanoyl-(R)-carnitine + CoA. The catalysed reaction is dodecanoyl-CoA + (R)-carnitine = O-dodecanoyl-R-carnitine + CoA. It catalyses the reaction tetradecanoyl-CoA + (R)-carnitine = O-tetradecanoyl-(R)-carnitine + CoA. It carries out the reaction (R)-carnitine + octadecanoyl-CoA = O-octadecanoyl-(R)-carnitine + CoA. The enzyme catalyses eicosanoyl-CoA + (R)-carnitine = O-eicosanoyl-(R)-carnitine + CoA. The catalysed reaction is (9Z)-tetradecenoyl-CoA + (R)-carnitine = O-(9Z)-tetradecenoyl-(R)-carnitine + CoA. It catalyses the reaction (5Z)-tetradecenoyl-CoA + (R)-carnitine = O-(5Z)-tetradecenoyl-(R)-carnitine + CoA. It carries out the reaction (R)-carnitine + (9Z)-octadecenoyl-CoA = O-(9Z)-octadecenoyl-(R)-carnitine + CoA. The enzyme catalyses 4,8-dimethylnonanoyl-CoA + (R)-carnitine = O-4,8-dimethylnonanoyl-(R)-carnitine + CoA. It functions in the pathway lipid metabolism; fatty acid beta-oxidation. Its function is as follows. Involved in the intramitochondrial synthesis of acylcarnitines from accumulated acyl-CoA metabolites. Reconverts acylcarnitines back into the respective acyl-CoA esters that can then undergo beta-oxidation, an essential step for the mitochondrial uptake of long-chain fatty acids and their subsequent beta-oxidation in the mitochondrion. Active with medium (C8-C12) and long-chain (C14-C18) acyl-CoA esters. The protein is Carnitine O-palmitoyltransferase 2, mitochondrial (cpt2) of Danio rerio (Zebrafish).